An 804-amino-acid chain; its full sequence is Cell surface sensor MSB2 (804 aa).

A signal peptide spans 1-20 (MHNFSKLAVAFVAAASFASA). Residues 21–694 (EPETKAKVER…TNQSATQRGT (674 aa)) lie on the Extracellular side of the membrane. N-linked (GlcNAc...) asparagine glycosylation is present at Asn-45. 2 stretches are compositionally biased toward low complexity: residues 46 to 58 (TTTP…SSTS) and 69 to 80 (SSFSSSASSSSA). 2 disordered regions span residues 46–90 (TTTP…RQPT) and 105–220 (TDST…ATSN). Residues 46–475 (TTTPASEASS…SVAPTSATSS (430 aa)) form a serine/threonine rich region (STR) region. Polar residues-rich tracts occupy residues 81-90 (QELTASRQPT) and 109-126 (PFSQ…SATG). 2 stretches are compositionally biased toward low complexity: residues 128–143 (VTPI…PSTA) and 150–169 (SALT…SVTS). Asn-157 carries an N-linked (GlcNAc...) asparagine glycan. Polar residues predominate over residues 170–188 (PGSTSGPAGTPESSSASDF). The span at 189–202 (TSAVATSRASTATS) shows a compositional bias: low complexity. Asn-298, Asn-308, Asn-357, and Asn-393 each carry an N-linked (GlcNAc...) asparagine glycan. A compositionally biased stretch (polar residues) spans 345 to 394 (VQTLPPVSTPTANGTVTSPPVDSQTTVLPTTTPGLSSDTIVTSPGVTANS). Residues 345–516 (VQTLPPVSTP…APTVLPSDLP (172 aa)) form a disordered region. 2 stretches are compositionally biased toward low complexity: residues 395–407 (TQVP…TIPT) and 427–476 (NNTV…TSSA). Residues Asn-427 and Asn-433 are each glycosylated (N-linked (GlcNAc...) asparagine). Residues 482–641 (WLPTTIIVQA…NGMLAHNLTM (160 aa)) form an HKR11-MSB2 homology domain (HMH) region. Residues 493–508 (LPSTTGSSTNAPSSAP) are compositionally biased toward polar residues. N-linked (GlcNAc...) asparagine glycosylation is found at Asn-629, Asn-638, Asn-669, Asn-683, and Asn-686. Positions 658 to 689 (KPAGAGSGTGGNGSNGPNDVFNNDNNSTNQSA) are disordered. Residues 660 to 671 (AGAGSGTGGNGS) show a composition bias toward gly residues. A compositionally biased stretch (low complexity) spans 672-686 (NGPNDVFNNDNNSTN). The helical transmembrane segment at 695–715 (VAGIAFGAVSLAAAYGAAMFI) threads the bilayer. The Cytoplasmic segment spans residues 716-804 (VARRYKKKRQ…VAQENSLGWN (89 aa)). Disordered regions lie at residues 724-748 (RQAH…PALM) and 762-804 (GVMG…LGWN). The segment covering 731-744 (SSVATPSEMRQSGS) has biased composition (polar residues). A compositionally biased stretch (low complexity) spans 774–787 (GSNGSGRSAGNSAR).

It belongs to the HKR1/MSB2 family.

The protein localises to the cell membrane. The protein resides in the vacuole membrane. MSB2 and SHO1 have overlapping functions in recognizing various surface signals for MAPK PMK1 activation and appressorium formation. While MSB2 is critical for sensing surface hydrophobicity and cutin monomers, SHO1 may play a more important role in recognizing rice leaf waxes. In Pyricularia oryzae (strain 70-15 / ATCC MYA-4617 / FGSC 8958) (Rice blast fungus), this protein is Cell surface sensor MSB2.